Consider the following 44-residue polypeptide: Protein PsbN (44 aa).

Residues 6–26 traverse the membrane as a helical segment; sequence FFFTIFLWFFLLSITAYSIYV.

This sequence belongs to the PsbN family.

Its subcellular location is the plastid. It is found in the chloroplast thylakoid membrane. In terms of biological role, may play a role in photosystem I and II biogenesis. This Stigeoclonium helveticum (Green alga) protein is Protein PsbN.